The primary structure comprises 394 residues: Protein NDRG1 (394 aa).

Ser2 is modified (N-acetylserine). Phosphoserine occurs at positions 2, 319, and 326. A disordered region spans residues 325–394 (RSRTASGSSV…AGPKSMEVSC (70 aa)). Residues 327–339 (RTASGSSVTSLDG) show a composition bias toward polar residues. Position 328 is a phosphothreonine; by SGK1 (Thr328). A phosphoserine; by SGK1 mark is found at Ser330 and Ser332. Residue Ser333 is modified to Phosphoserine. Thr335 bears the Phosphothreonine mark. Ser336 bears the Phosphoserine mark. 3 repeat units span residues 339 to 348 (GTRSRSHTSE), 349 to 358 (GTRSRSHTSE), and 359 to 368 (GTRSRSHTSE). The segment at 339-368 (GTRSRSHTSEGTRSRSHTSEGTRSRSHTSE) is 3 X 10 AA tandem repeats of G-T-R-S-R-S-H-T-S-E. The residue at position 340 (Thr340) is a Phosphothreonine. Ser342 bears the Phosphoserine mark. The segment covering 345-371 (HTSEGTRSRSHTSEGTRSRSHTSEGAH) has biased composition (basic and acidic residues). At Thr346 the chain carries Phosphothreonine; by SGK1. Ser352 carries the post-translational modification Phosphoserine. Thr356 is subject to Phosphothreonine; by SGK1. Ser362 carries the phosphoserine modification. Ser364 is subject to Phosphoserine; by SGK1. At Thr366 the chain carries Phosphothreonine; by SGK1. The residue at position 375 (Thr375) is a Phosphothreonine.

Belongs to the NDRG family. Interacts with RAB4A (membrane-bound form); the interaction involves NDRG1 in vesicular recycling of CDH1. In terms of processing, under stress conditions, phosphorylated in the C-terminal on many serine and threonine residues. Phosphorylated in vitro by PKA. Phosphorylation enhanced by increased intracellular cAMP levels. Homocysteine induces dephosphorylation. Phosphorylation by SGK1 is cell cycle dependent. In terms of tissue distribution, ubiquitous; expressed most prominently in placental membranes and prostate, kidney, small intestine, and ovary tissues. Also expressed in heart, brain, skeletal muscle, lung, liver and pancreas. Low levels in peripheral blood leukocytes and in tissues of the immune system. Expressed mainly in epithelial cells. Also found in Schwann cells of peripheral neurons. Reduced expression in adenocarcinomas compared to normal tissues. In colon, prostate and placental membranes, the cells that border the lumen show the highest expression.

The protein resides in the cytoplasm. It localises to the cytosol. It is found in the cytoskeleton. The protein localises to the microtubule organizing center. Its subcellular location is the centrosome. The protein resides in the nucleus. It localises to the cell membrane. Stress-responsive protein involved in hormone responses, cell growth, and differentiation. Acts as a tumor suppressor in many cell types. Necessary but not sufficient for p53/TP53-mediated caspase activation and apoptosis. Has a role in cell trafficking, notably of the Schwann cell, and is necessary for the maintenance and development of the peripheral nerve myelin sheath. Required for vesicular recycling of CDH1 and TF. May also function in lipid trafficking. Protects cells from spindle disruption damage. Functions in p53/TP53-dependent mitotic spindle checkpoint. Regulates microtubule dynamics and maintains euploidy. The sequence is that of Protein NDRG1 (NDRG1) from Homo sapiens (Human).